The chain runs to 1196 residues: METKPKTATTIKVPPGPLGYVYARACPSEGIELLALLSARSGDSDVAVAPLVVGLTVESGFEANVAVVVGSRTTGLGGTAVSLKLTPSHYSSSVYVFHGGRHLDPSTQAPNLTRLCERARRHFGFSDYTPRPGDLKHETTGEALCERLGLDPDRALLYLVVTEGFKEAVSINNTFLHLGGSDKVTIGGAEVHRIPVYPLQLFMPDFSRVIAEPFNANHRSIGEKFTYPLPFFNRPLNRLLFEAVVGPAAVALRCRNVDAVARAAAHLAFDENHEGAALPADITFTAFEASQGKTPRGERDGGGKGAAGGFEQRLASVMAGDAALALESIVSMAVFDEPPTDISAWPLFEGQDTAAARANAVGAYLARAAGLVGAMVFSTNSALHLTEVDDAGPADPKDHSKPSFYRFFLVPGTHVAANPQVDREGHVVPGFEGRPTAPLVGGTQEFAGEHLAMLCGFSPALLAKMLFYLERCDGAVIVGRQEMDVFRYVADSNQTDVPCNLCTFDTRHACVHTTLMRLRARHPKFASAARGAIGVFGTMNSMYSDCDVLGNYAAFSALKRADGSETARTIMQETYRAATERVMAELETLQYVDQAVPTAMGRLETIITNREALHTVVNNVRQVVDREVEQLMRNLVEGRNFKFRDGLGEANHAMSLTLDPYACGPCPLLQLLGRRSNLAVYQDLALSQCHGVFAGQSVEGRNFRNQFQPVLRRRVMDMFNNGFLSAKTLTVALSEGAAICAPSLTAGQTAPAESSFEGDVARVTLGFPKELRVKSRVLFAGASANASEAAKARVASLQSAYQKPDKRVDILLGPLGFLLKQFHAAIFPNGKPPGSNQPNPQWFWTALQRNQLPARLLSREDIETIAFIKKFSLDYGAINFINLAPNNVSELAMYYMANQILRYCDHSTYFINTLTAIIAGSRRPPSVQAAAAWSAQGGAGLEAGARALVDAVDAHPGAWTSMFASCNLLRPVMAARPMVVLGLSISKYYGMAGNDRVFQAGNWASLMGGKNACPLLIFDRTRKFVLACPRAGFVCAASSLGGGAHESSLCEQLRGIISEGGAAVASSVFVATVKSLGPRTQQLQIEDWLALLEDEYLSEEMMELTARALERGNGEWSTDAALEVAHEAEALVSQLGNAGEVFNFGDFGCEDDNATPFGGPGAPGPAFAGRKRAFHGDDPFGEGPPDKKGDLTLDML.

A zinc finger spans residues 499–512; that stretch reads CNLCTFDTRHACVH. Short sequence motifs (required for filament formation) lie at residues 843–844 and 1142–1144; these read FW and FNF. The interval 1158-1196 is disordered; sequence GGPGAPGPAFAGRKRAFHGDDPFGEGPPDKKGDLTLDML. Residues 1170 to 1196 are required for nuclear localization; sequence RKRAFHGDDPFGEGPPDKKGDLTLDML. Basic and acidic residues predominate over residues 1174-1196; the sequence is FHGDDPFGEGPPDKKGDLTLDML.

This sequence belongs to the herpesviridae major DNA-binding protein family. In terms of assembly, homooligomers. Forms double-helical filaments necessary for the formation of replication compartments within the host nucleus. Interacts with the origin-binding protein. Interacts with the helicase primase complex; this interaction stimulates primer synthesis activity of the helicase-primase complex. Interacts with the DNA polymerase. Interacts with the alkaline exonuclease; this interaction increases its nuclease processivity.

The protein resides in the host nucleus. In terms of biological role, plays several crucial roles in viral infection. Participates in the opening of the viral DNA origin to initiate replication by interacting with the origin-binding protein. May disrupt loops, hairpins and other secondary structures present on ssDNA to reduce and eliminate pausing of viral DNA polymerase at specific sites during elongation. Promotes viral DNA recombination by performing strand-transfer, characterized by the ability to transfer a DNA strand from a linear duplex to a complementary single-stranded DNA circle. Can also catalyze the renaturation of complementary single strands. Additionally, reorganizes the host cell nucleus, leading to the formation of prereplicative sites and replication compartments. This process is driven by the protein which can form double-helical filaments in the absence of DNA. This chain is Major DNA-binding protein, found in Homo sapiens (Human).